The chain runs to 399 residues: Argininosuccinate synthase (399 aa).

An ATP-binding site is contributed by 9–17; that stretch reads AYSGGLDTS. Y87 contacts L-citrulline. Residue G117 participates in ATP binding. 3 residues coordinate L-aspartate: T119, N123, and D124. N123 contributes to the L-citrulline binding site. Residues R127, S176, S185, E261, and Y273 each coordinate L-citrulline.

This sequence belongs to the argininosuccinate synthase family. Type 1 subfamily. As to quaternary structure, homotetramer.

Its subcellular location is the cytoplasm. It catalyses the reaction L-citrulline + L-aspartate + ATP = 2-(N(omega)-L-arginino)succinate + AMP + diphosphate + H(+). It functions in the pathway amino-acid biosynthesis; L-arginine biosynthesis; L-arginine from L-ornithine and carbamoyl phosphate: step 2/3. The sequence is that of Argininosuccinate synthase from Chlorobium chlorochromatii (strain CaD3).